The following is a 262-amino-acid chain: LCVLCLLPQSPALPLPREAGGHSESQWKQAQEYLKRFYPSDAKSRDADSFGAQLKEMQKFFRLPVTGMLDSRVIVVMQQPRCGLPDTGEDLPSRNRPKWISKVVTYRIISYTRDLPRVTVDHLVAKALNMWSKEIPLSFRRVVLGIPDIVIGFARGAHGDFYPFDGPGGTLAHAYEPGPGLGGDAHFDEDERWADGRGLGINFLAVATHELGHSLGLRHSSDPDSVMYPTYGARDSENFKLSPGDIREIQELYGKRSKSRKK.

Residues Leu-1 to Ala-12 form the signal peptide. Residues Leu-13–Glu-89 constitute a propeptide, activation peptide. The Cysteine switch motif lies at Pro-80–Thr-87. Cys-82 serves as a coordination point for Zn(2+). Asp-148 serves as a coordination point for Ca(2+). Residues His-158 and Asp-160 each coordinate Zn(2+). Ca(2+) contacts are provided by Asp-165, Gly-166, Gly-168, and Thr-170. His-173 serves as a coordination point for Zn(2+). Ca(2+) contacts are provided by Gly-180, Gly-182, and Asp-184. Zn(2+) is bound at residue His-186. Ca(2+) is bound by residues Asp-188 and Glu-191. A Zn(2+)-binding site is contributed by His-209. Residue Glu-210 is part of the active site. Residues His-213 and His-219 each contribute to the Zn(2+) site.

The protein belongs to the peptidase M10A family. Requires Ca(2+) as cofactor. It depends on Zn(2+) as a cofactor.

The protein resides in the secreted. The protein localises to the extracellular space. It localises to the extracellular matrix. It carries out the reaction Cleavage of 14-Ala-|-Leu-15 and 16-Tyr-|-Leu-17 in B chain of insulin. No action on collagen types I, II, IV, V. Cleaves gelatin chain alpha2(I) &gt; alpha1(I).. Degrades casein, gelatins of types I, III, IV, and V, and fibronectin. Activates procollagenase. In Felis catus (Cat), this protein is Matrilysin (MMP7).